The primary structure comprises 187 residues: uncharacterized protein (187 aa).

This is an uncharacterized protein from Homo sapiens (Human).